The following is a 618-amino-acid chain: Grainyhead-like protein 1 homolog (618 aa).

The tract at residues 1-91 is transcription activation; it reads MTQEYDNKRP…EVEHPEPDHS (91 aa). A compositionally biased stretch (basic and acidic residues) spans 74-92; sequence RRSSTAKPEVEHPEPDHSK. Residues 74–94 are disordered; the sequence is RRSSTAKPEVEHPEPDHSKRN. Threonine 208 bears the Phosphothreonine mark. Residues 248 to 474 form the Grh/CP2 DB domain; the sequence is SGNNFEYTLE…DLDTQPVLFI (227 aa). Interaction with DNA stretches follow at residues 380-389 and 427-430; these read TDFSSQKGVK and RKIR.

The protein belongs to the grh/CP2 family. Grainyhead subfamily. As to quaternary structure, binds DNA as homodimer. Homodimer, also forms heterodimers with GRHL2 or GRHL3. Methylation at Arg-9 and Lys-116 may be involved in regulating transcriptional activation.

The protein localises to the nucleus. Its function is as follows. Transcription factor involved in epithelial development. Binds directly to the consensus DNA sequence 5'-AACCGGTT-3'. Important regulator of DSG1 in the context of hair anchorage and epidermal differentiation, participates in the maintenance of the skin barrier. There is no genetic interaction with GRHL3, nor functional cooperativity due to diverse target gene selectivity during epithelia development. May play a role in regulating glucose homeostasis and insulin signaling. This is Grainyhead-like protein 1 homolog (GRHL1) from Pongo abelii (Sumatran orangutan).